We begin with the raw amino-acid sequence, 459 residues long: MTKFTKNKQEKNIIITIKRLGINGEGIGYYKKKIIFIPGALPNEVVVAKIVDRHPHYLEGELVRIKEKSPDRVTFPKGVDPAVGGLELAHLSYPKQLEFKQHLILESLRKYHPRDYIKYKVKKTIPTPNAWNYRNKAQYQIEFNKGKSKLGLYAPNSRRLIDLPDMPTQTKETQKVEREIKKLIDKLHIRIADFRRHTDGIKTIAVRQSNATGEIQVTLITIGKKIKDLKLLASHIMKLPNVVSVFQNETQWQNPQVWGNKTIKLFGKSHITEEILGKKFKLSPRAFFQLNPEQTTTLYSEALKYLDLTPDQTLIDAYAGVGTLGILASDQVRQVIGIESIPEAVIDAQENCRLNHVRNAEYIQGNVEKLLPELKNQGVPINALIVDPPRTGLSKKLIKTLLEVKPETFVYVSCNPATLAKDLVLLSDAYDVRVIQPVDMMPQTPRWEGVTKLVLRKNK.

In terms of domain architecture, TRAM spans 6-64 (KNKQEKNIIITIKRLGINGEGIGYYKKKIIFIPGALPNEVVVAKIVDRHPHYLEGELVR). Residues Q289, Y318, E339, and D387 each contribute to the S-adenosyl-L-methionine site. The active-site Nucleophile is the C414.

Belongs to the class I-like SAM-binding methyltransferase superfamily. RNA M5U methyltransferase family.

This is an uncharacterized protein from Lactobacillus johnsonii (strain CNCM I-12250 / La1 / NCC 533).